The sequence spans 344 residues: UDP-N-acetylglucosamine transporter UGNT1 (344 aa).

The tract at residues 1–23 (MRNNPVLPVSDPPLAGENDSDGK) is disordered. The next 9 membrane-spanning stretches (helical) occupy residues 41–61 (YAAL…KAAL), 66–86 (FPCV…FLYA), 92–112 (IISF…FVPV), 114–134 (TLFH…ASMA), 167–187 (YTRS…FAGA), 194–214 (FYGY…LATI), 226–246 (FGLM…WTFI), 264–284 (FMVV…CIFL), and 304–324 (FTVG…MNVI).

This sequence belongs to the TPT transporter family. UGnT (TC 2.A.7.15) subfamily. Expressed in roots, leaves, stems, flowers and siliques.

Its subcellular location is the golgi apparatus membrane. Its function is as follows. Mediates the transport of UDP-N-acetylglucosamine (UDP-GlcNAc) across the Golgi apparatus membrane. Delivers an essential substrate for the maturation of N-glycans and the GlcNAc-containing glycosyl inositol phosphorylceramide (GIPC) class of sphingolipids in the Golgi apparatus. The chain is UDP-N-acetylglucosamine transporter UGNT1 from Arabidopsis thaliana (Mouse-ear cress).